A 158-amino-acid chain; its full sequence is MILFVGFLLMEIVMPQISRTALVPYSAEQMYQLVNDVQSYPQFLPGCTGSRILESTPGQMTAAVDVSKAGISKTFTTRNQLTSNQSILMSLVDGPFKKLIGGWKFTPLSQDACRIEFHLDFEFTNKLIELAFGRVFKELAANMVQAFTVRAKEVYSAR.

The segment at 70 to 158 (GISKTFTTRN…VRAKEVYSAR (89 aa)) is required for resistance of nitrosative stress but not persistence or toxic effects.

Belongs to the ribosome association toxin RatA family. Associates with 50S ribosomes.

Its function is as follows. Toxic component of a type II toxin-antitoxin (TA) system. Binds to 50S ribosomal subunits, preventing them from associating with 30S subunits to form 70S ribosomes. In this strain of E.coli low levels of PasT complement operon disruption, however high levels are toxic; their effects are abrogated by high level expression of cognate antitoxin PasI. Plays a role in persistence after antibiotic exposure and survival of nitrosative stress; the toxic and persistence phenotypes are conferred by the same N-terminal region of the protein, while the stress resistance effects can be uncoupled from them in deletion mutants. The chain is Persistence and stress-resistance toxin PasT (pasT) from Escherichia coli O6:H1 (strain CFT073 / ATCC 700928 / UPEC).